We begin with the raw amino-acid sequence, 524 residues long: GMP synthase [glutamine-hydrolyzing] (524 aa).

A Glutamine amidotransferase type-1 domain is found at 9–207; the sequence is RILILDFSSQ…VIHICQCIPN (199 aa). Residue Cys-86 is the Nucleophile of the active site. Residues His-181 and Glu-183 contribute to the active site. Residues 208–399 form the GMPS ATP-PPase domain; the sequence is WTTKHIIEDS…LGLPADLIYR (192 aa). 235 to 241 contributes to the ATP binding site; it reads SGGVDSA.

Homodimer.

The enzyme catalyses XMP + L-glutamine + ATP + H2O = GMP + L-glutamate + AMP + diphosphate + 2 H(+). The protein operates within purine metabolism; GMP biosynthesis; GMP from XMP (L-Gln route): step 1/1. Functionally, catalyzes the synthesis of GMP from XMP. In Coxiella burnetii (strain Dugway 5J108-111), this protein is GMP synthase [glutamine-hydrolyzing].